The chain runs to 291 residues: Feruloyl esterase B (291 aa).

Residues 1–18 (MLVRSFLGFAVLAATCLA) form the signal peptide. N-linked (GlcNAc...) asparagine glycosylation occurs at N117. S136 (charge relay system) is an active-site residue. N-linked (GlcNAc...) asparagine glycosylation occurs at N179.

It belongs to the carbohydrate esterase 1 (CE1) family. Feruloyl esterase type B subfamily.

The protein localises to the secreted. It carries out the reaction feruloyl-polysaccharide + H2O = ferulate + polysaccharide.. In terms of biological role, feruloyl esterase which acts in synergy with xylanases in degradation of plant cell walls. Hydrolyzes the ester linkage of hydroxycinnamic acids (ferulic acid (FA) and p-coumaric acid) and diferulates present in plant cell walls. Is active on substrates containing ferulic acid ester linked to the C-5 and C-2 linkages of arabinofuranose, while it was found capable of de-esterifying acetylated glucuronoxylans. Efficiently releases ferulic acid (FA) from destarched wheat bran when incubated with an M3 xylanase. This is Feruloyl esterase B (Fae1a) from Thermothelomyces thermophilus (strain ATCC 42464 / BCRC 31852 / DSM 1799) (Sporotrichum thermophile).